The following is a 374-amino-acid chain: Eukaryotic translation initiation factor 3 subunit M (374 aa).

S2 bears the N-acetylserine mark. A phosphoserine mark is found at S2 and S152. The region spanning 180–339 is the PCI domain; sequence AASKVMVELL…RKVVVSHSTH (160 aa). N6-acetyllysine is present on K254. Positions 344 to 374 are interaction with HSV-1 and HSV-2; the sequence is KQQWQQLYDTLNAWKQNLNKVKNSLLSLSDT. Position 367 is a phosphoserine (S367).

In terms of assembly, component of the eukaryotic translation initiation factor 3 (eIF-3) complex, which is composed of 13 subunits: EIF3A, EIF3B, EIF3C, EIF3D, EIF3E, EIF3F, EIF3G, EIF3H, EIF3I, EIF3J, EIF3K, EIF3L and EIF3M. The eIF-3 complex appears to include 3 stable modules: module A is composed of EIF3A, EIF3B, EIF3G and EIF3I; module B is composed of EIF3F, EIF3H, and EIF3M; and module C is composed of EIF3C, EIF3D, EIF3E, EIF3K and EIF3L. EIF3C of module C binds EIF3B of module A and EIF3H of module B, thereby linking the three modules. EIF3J is a labile subunit that binds to the eIF-3 complex via EIF3B. The eIF-3 complex interacts with RPS6KB1 under conditions of nutrient depletion. Mitogenic stimulation leads to binding and activation of a complex composed of MTOR and RPTOR, leading to phosphorylation and release of RPS6KB1 and binding of EIF4B to eIF-3. In terms of tissue distribution, broadly expressed.

It is found in the cytoplasm. Component of the eukaryotic translation initiation factor 3 (eIF-3) complex, which is required for several steps in the initiation of protein synthesis. The eIF-3 complex associates with the 40S ribosome and facilitates the recruitment of eIF-1, eIF-1A, eIF-2:GTP:methionyl-tRNAi and eIF-5 to form the 43S pre-initiation complex (43S PIC). The eIF-3 complex stimulates mRNA recruitment to the 43S PIC and scanning of the mRNA for AUG recognition. The eIF-3 complex is also required for disassembly and recycling of post-termination ribosomal complexes and subsequently prevents premature joining of the 40S and 60S ribosomal subunits prior to initiation. The eIF-3 complex specifically targets and initiates translation of a subset of mRNAs involved in cell proliferation, including cell cycling, differentiation and apoptosis, and uses different modes of RNA stem-loop binding to exert either translational activation or repression. Its function is as follows. (Microbial infection) May favor virus entry in case of infection with herpes simplex virus 1 (HSV1) or herpes simplex virus 2 (HSV2). The chain is Eukaryotic translation initiation factor 3 subunit M from Homo sapiens (Human).